A 338-amino-acid chain; its full sequence is uncharacterized protein (338 aa).

In terms of domain architecture, Radical SAM core spans 111–334; it reads HLGEERVLVP…LELAEKYNLD (224 aa). [4Fe-4S] cluster is bound by residues Cys129, Cys133, and Cys136.

Requires [4Fe-4S] cluster as cofactor.

This is an uncharacterized protein from Methanocaldococcus jannaschii (strain ATCC 43067 / DSM 2661 / JAL-1 / JCM 10045 / NBRC 100440) (Methanococcus jannaschii).